The chain runs to 350 residues: (RS)-norcoclaurine 6-O-methyltransferase (350 aa).

Residue M166 coordinates S-adenosyl-L-methionine. A substrate-binding site is contributed by D169. Residues T170, G195, D218, 238–239 (DM), and K252 each bind S-adenosyl-L-methionine. Residues 253–257 (CILHD) and D306 each bind substrate. The Proton acceptor role is filled by H256.

This sequence belongs to the class I-like SAM-binding methyltransferase superfamily. Cation-independent O-methyltransferase family. COMT subfamily. In terms of assembly, homodimer. In terms of tissue distribution, expressed in leaf primordia of rhizomes and root endodermis.

The enzyme catalyses (S)-norcoclaurine + S-adenosyl-L-methionine = (S)-coclaurine + S-adenosyl-L-homocysteine + H(+). It carries out the reaction norcoclaurine + S-adenosyl-L-methionine = coclaurine + S-adenosyl-L-homocysteine + H(+). Its activity is regulated as follows. Inhibited by sanguinarine. Its function is as follows. Involved in the biosynthesis of coclaurine, a precursor of benzylisoquinoline alkaloids. Catalyzes the transfer of the S-methyl group of S-adenosyl-L-methionine (AdoMet) to the 6-hydroxyl group of norcoclaurine to form coclaurine. The chain is (RS)-norcoclaurine 6-O-methyltransferase from Thalictrum flavum subsp. glaucum (Yellow meadow rue).